Consider the following 190-residue polypeptide: dCTP deaminase (190 aa).

113–118 provides a ligand contact to dCTP; it reads KSTYAR. Glutamate 139 serves as the catalytic Proton donor/acceptor. The dCTP site is built by glutamine 158, tyrosine 172, lysine 181, and glutamine 182.

The protein belongs to the dCTP deaminase family. As to quaternary structure, homotrimer.

It carries out the reaction dCTP + H2O + H(+) = dUTP + NH4(+). Its pathway is pyrimidine metabolism; dUMP biosynthesis; dUMP from dCTP (dUTP route): step 1/2. Catalyzes the deamination of dCTP to dUTP. This chain is dCTP deaminase, found in Chlamydia abortus (strain DSM 27085 / S26/3) (Chlamydophila abortus).